A 101-amino-acid chain; its full sequence is Gamma-secretase subunit PEN-2 (101 aa).

Over 1–17 (MNLERVSNEEKLNLCRK) the chain is Cytoplasmic. An intramembrane region (helical) is located at residues 18–36 (YYLGGFAFLPFLWLVNIFW). Topologically, residues 37–57 (FFKEAFFAPAYTEQSQIKGYV) are cytoplasmic. Residues 58-78 (WRSAVGFLFWVIVLTTWITIF) form a helical membrane-spanning segment. Residues 79–101 (QIYRPRWGALGDYLSFTIPLGTP) are Lumenal-facing.

The protein belongs to the PEN-2 family. In terms of assembly, the functional gamma-secretase complex is composed of at least four polypeptides: a presenilin homodimer (PSEN1 or PSEN2), nicastrin (NCSTN), APH1 (APH1A or APH1B) and PSENEN.

It localises to the endoplasmic reticulum membrane. The protein localises to the golgi apparatus. It is found in the golgi stack membrane. Its subcellular location is the cell membrane. The protein resides in the membrane. Functionally, essential subunit of the gamma-secretase complex, an endoprotease complex that catalyzes the intramembrane cleavage of integral membrane proteins such as Notch receptors and APP (amyloid-beta precursor protein). The gamma-secretase complex plays a role in Notch and Wnt signaling cascades and regulation of downstream processes via its role in processing key regulatory proteins, and by regulating cytosolic CTNNB1 levels. PSENEN modulates both endoproteolysis of presenilin and gamma-secretase activity. The protein is Gamma-secretase subunit PEN-2 (Psenen) of Rattus norvegicus (Rat).